Reading from the N-terminus, the 651-residue chain is L-aspartate oxidase, chloroplastic (651 aa).

The transit peptide at 1-74 (MAAHVSTGNI…PISETSKPIR (74 aa)) directs the protein to the chloroplast. Residues 92 to 95 (SGVA), lysine 114, 121 to 128 (NTNYAQGG), and aspartate 292 contribute to the FAD site. Arginine 368 functions as the Proton donor/acceptor in the catalytic mechanism. FAD is bound by residues glutamate 453 and 469-470 (SL).

This sequence belongs to the FAD-dependent oxidoreductase 2 family. NadB subfamily. As to quaternary structure, interacts in vitro with QS. Requires FAD as cofactor.

It is found in the plastid. Its subcellular location is the chloroplast. The enzyme catalyses L-aspartate + O2 = iminosuccinate + H2O2. Its pathway is cofactor biosynthesis; NAD(+) biosynthesis; iminoaspartate from L-aspartate (oxidase route): step 1/1. Functionally, catalyzes the oxidation of L-aspartate to iminoaspartate. Can complement nadB-deficient E.coli mutant. Plays a role in stomatal immunity. The polypeptide is L-aspartate oxidase, chloroplastic (Arabidopsis thaliana (Mouse-ear cress)).